The following is a 691-amino-acid chain: Elongation factor G 1 (691 aa).

Positions 8 to 282 (ERVRNIGIAA…AVVDYLPAPQ (275 aa)) constitute a tr-type G domain. GTP-binding positions include 17–24 (AHIDAGKT), 81–85 (DTPGH), and 135–138 (NKMD).

The protein belongs to the TRAFAC class translation factor GTPase superfamily. Classic translation factor GTPase family. EF-G/EF-2 subfamily.

It localises to the cytoplasm. Catalyzes the GTP-dependent ribosomal translocation step during translation elongation. During this step, the ribosome changes from the pre-translocational (PRE) to the post-translocational (POST) state as the newly formed A-site-bound peptidyl-tRNA and P-site-bound deacylated tRNA move to the P and E sites, respectively. Catalyzes the coordinated movement of the two tRNA molecules, the mRNA and conformational changes in the ribosome. This chain is Elongation factor G 1, found in Trichodesmium erythraeum (strain IMS101).